The primary structure comprises 668 residues: DNA mismatch repair protein MutL (668 aa).

Positions 437 to 459 (TYQSQYSETGSHSQETLPLSEQK) are disordered. Residues 438-459 (YQSQYSETGSHSQETLPLSEQK) are compositionally biased toward polar residues.

Belongs to the DNA mismatch repair MutL/HexB family.

This protein is involved in the repair of mismatches in DNA. It is required for dam-dependent methyl-directed DNA mismatch repair. May act as a 'molecular matchmaker', a protein that promotes the formation of a stable complex between two or more DNA-binding proteins in an ATP-dependent manner without itself being part of a final effector complex. The sequence is that of DNA mismatch repair protein MutL from Leuconostoc citreum (strain KM20).